The following is a 427-amino-acid chain: Putative ABC transporter substrate-binding protein YesO (427 aa).

The protein belongs to the bacterial solute-binding protein 1 family.

May play a role in the degradation of type I rhamnogalacturonan derived from plant cell walls. The polypeptide is Putative ABC transporter substrate-binding protein YesO (yesO) (Bacillus subtilis (strain 168)).